Here is a 40-residue protein sequence, read N- to C-terminus: Photosystem II reaction center protein J (40 aa).

The chain crosses the membrane as a helical span at residues 10 to 30 (LWIIGTVTGILVIGLIGIFFF).

The protein belongs to the PsbJ family. In terms of assembly, PSII is composed of 1 copy each of membrane proteins PsbA, PsbB, PsbC, PsbD, PsbE, PsbF, PsbH, PsbI, PsbJ, PsbK, PsbL, PsbM, PsbT, PsbX, PsbY, PsbZ, Psb30/Ycf12, at least 3 peripheral proteins of the oxygen-evolving complex and a large number of cofactors. It forms dimeric complexes.

The protein localises to the plastid membrane. In terms of biological role, one of the components of the core complex of photosystem II (PSII). PSII is a light-driven water:plastoquinone oxidoreductase that uses light energy to abstract electrons from H(2)O, generating O(2) and a proton gradient subsequently used for ATP formation. It consists of a core antenna complex that captures photons, and an electron transfer chain that converts photonic excitation into a charge separation. This chain is Photosystem II reaction center protein J, found in Cuscuta exaltata (Tall dodder).